The primary structure comprises 625 residues: Tyrosine-protein kinase ITK/TSK (625 aa).

In terms of domain architecture, PH spans F4–R117. The Btk-type zinc finger occupies N119–S155. H127, C138, C139, and C149 together coordinate Zn(2+). The tract at residues D153–F174 is disordered. The 61-residue stretch at P177–P237 folds into the SH3 domain. Y186 is subject to Phosphotyrosine; by autocatalysis. The SH2 domain occupies W245–V343. A Protein kinase domain is found at L368–I620. Residues I374–V382 and K396 each bind ATP. The Proton acceptor role is filled by D487. A Phosphotyrosine; by LCK modification is found at Y517. S570 carries the post-translational modification Phosphoserine.

It belongs to the protein kinase superfamily. Tyr protein kinase family. TEC subfamily. As to quaternary structure, homooligomerizes; this association negatively regulates kinase activity. Interacts with PPIA/CYPA; this interaction regulates TCR signal strength via a proline-directed conformational switch in ITK. Interacts with THEMIS. Interacts with FASLG. Interacts with VAV1; this interaction is important for VAV1 localization and TCR-induced actin polarization. Interacts with TBX21. It depends on Zn(2+) as a cofactor. Phosphorylated at Tyr-517 in the activation loop of the kinase domain by LCK. Subsequent autophosphorylation at Tyr-186 leads to the kinase activation. The autophosphorylated Tyr-186 lies within the substrate binding sequence of the SH3 domain. Post-translationally, ubiquitinated. In terms of tissue distribution, is detected in the thymus, lymph node and very faintly in the spleen, but is not detected in the liver, lung, kidney, heart, brain, intestine or testis. Expressed in T-lymphocytes and mast cells. It may also be expressed in natural killer cells.

Its subcellular location is the cytoplasm. It is found in the nucleus. It carries out the reaction L-tyrosyl-[protein] + ATP = O-phospho-L-tyrosyl-[protein] + ADP + H(+). Functionally, tyrosine kinase that plays an essential role in regulation of the adaptive immune response. Regulates the development, function and differentiation of conventional T-cells and nonconventional NKT-cells. When antigen presenting cells (APC) activate T-cell receptor (TCR), a series of phosphorylation lead to the recruitment of ITK to the cell membrane, in the vicinity of the stimulated TCR receptor, where it is phosphorylated by LCK. Phosphorylation leads to ITK autophosphorylation and full activation. Once activated, phosphorylates PLCG1, leading to the activation of this lipase and subsequent cleavage of its substrates. In turn, the endoplasmic reticulum releases calcium in the cytoplasm and the nuclear activator of activated T-cells (NFAT) translocates into the nucleus to perform its transcriptional duty. Phosphorylates 2 essential adapter proteins: the linker for activation of T-cells/LAT protein and LCP2. Then, a large number of signaling molecules such as VAV1 are recruited and ultimately lead to lymphokine production, T-cell proliferation and differentiation. Required for TCR-mediated calcium response in gamma-delta T-cells, may also be involved in the modulation of the transcriptomic signature in the Vgamma2-positive subset of immature gamma-delta T-cells. Phosphorylates TBX21 at 'Tyr-525' and mediates its interaction with GATA3. This Mus musculus (Mouse) protein is Tyrosine-protein kinase ITK/TSK (Itk).